The sequence spans 359 residues: DNA replication and repair protein RecF (359 aa).

Position 30–37 (30–37 (GPNGSGKT)) interacts with ATP.

The protein belongs to the RecF family.

The protein localises to the cytoplasm. Its function is as follows. The RecF protein is involved in DNA metabolism; it is required for DNA replication and normal SOS inducibility. RecF binds preferentially to single-stranded, linear DNA. It also seems to bind ATP. This chain is DNA replication and repair protein RecF, found in Psychromonas ingrahamii (strain DSM 17664 / CCUG 51855 / 37).